A 209-amino-acid polypeptide reads, in one-letter code: Ribosomal RNA large subunit methyltransferase E (209 aa).

S-adenosyl-L-methionine is bound by residues glycine 63, tryptophan 65, aspartate 83, aspartate 99, and aspartate 124. Lysine 164 serves as the catalytic Proton acceptor.

This sequence belongs to the class I-like SAM-binding methyltransferase superfamily. RNA methyltransferase RlmE family.

The protein resides in the cytoplasm. The catalysed reaction is uridine(2552) in 23S rRNA + S-adenosyl-L-methionine = 2'-O-methyluridine(2552) in 23S rRNA + S-adenosyl-L-homocysteine + H(+). In terms of biological role, specifically methylates the uridine in position 2552 of 23S rRNA at the 2'-O position of the ribose in the fully assembled 50S ribosomal subunit. The sequence is that of Ribosomal RNA large subunit methyltransferase E from Shewanella halifaxensis (strain HAW-EB4).